The following is a 918-amino-acid chain: Valine--tRNA ligase (918 aa).

A 'HIGH' region motif is present at residues 50–60 (PNVTGSLHMGH). Positions 548–552 (KMSKS) match the 'KMSKS' region motif. K551 lines the ATP pocket. Residues 849–883 (NDFVNLEALKDRLTKDLKKVNSDIETLNKRISNKN) adopt a coiled-coil conformation.

This sequence belongs to the class-I aminoacyl-tRNA synthetase family. ValS type 1 subfamily. Monomer.

It is found in the cytoplasm. It catalyses the reaction tRNA(Val) + L-valine + ATP = L-valyl-tRNA(Val) + AMP + diphosphate. In terms of biological role, catalyzes the attachment of valine to tRNA(Val). As ValRS can inadvertently accommodate and process structurally similar amino acids such as threonine, to avoid such errors, it has a 'posttransfer' editing activity that hydrolyzes mischarged Thr-tRNA(Val) in a tRNA-dependent manner. The sequence is that of Valine--tRNA ligase from Prochlorococcus marinus subsp. pastoris (strain CCMP1986 / NIES-2087 / MED4).